The chain runs to 151 residues: Aspartate 1-decarboxylase (151 aa).

Serine 26 acts as the Schiff-base intermediate with substrate; via pyruvic acid in catalysis. Serine 26 is modified (pyruvic acid (Ser)). Substrate is bound at residue threonine 58. The active-site Proton donor is the tyrosine 59. Glycine 74–alanine 76 contributes to the substrate binding site.

Belongs to the PanD family. Heterooctamer of four alpha and four beta subunits. Requires pyruvate as cofactor. Post-translationally, is synthesized initially as an inactive proenzyme, which is activated by self-cleavage at a specific serine bond to produce a beta-subunit with a hydroxyl group at its C-terminus and an alpha-subunit with a pyruvoyl group at its N-terminus.

It localises to the cytoplasm. It catalyses the reaction L-aspartate + H(+) = beta-alanine + CO2. The protein operates within cofactor biosynthesis; (R)-pantothenate biosynthesis; beta-alanine from L-aspartate: step 1/1. Its function is as follows. Catalyzes the pyruvoyl-dependent decarboxylation of aspartate to produce beta-alanine. The sequence is that of Aspartate 1-decarboxylase from Crocosphaera subtropica (strain ATCC 51142 / BH68) (Cyanothece sp. (strain ATCC 51142)).